Reading from the N-terminus, the 47-residue chain is Defensin-like protein 2 (47 aa).

4 disulfides stabilise this stretch: C3–C47, C14–C36, C20–C41, and C24–C43.

It belongs to the DEFL family.

The sequence is that of Defensin-like protein 2 from Zea mays (Maize).